The sequence spans 616 residues: ATP-dependent RNA helicase VAD1 (616 aa).

The segment at 1–35 is disordered; that stretch reads MASSSTLANDDWKQGLAAPPKDLRPQTEDVTATQG. The Q motif signature appears at 36–64; the sequence is SRFEDFGLRRELLMGIYTAGFERPSPIQE. A Helicase ATP-binding domain is found at 67 to 238; sequence IPMALTGRDI…DQHMVQPYEI (172 aa). 80–87 serves as a coordination point for ATP; it reads AKNGTGKT. Residues 186–189 carry the DEAD box motif; it reads DEAD. Residues 248–408 enclose the Helicase C-terminal domain; sequence GVTQYYAYVE…PIPAVIDPVL (161 aa). Residues 416-616 are disordered; the sequence is EEERESPPPK…GASQSQQAQA (201 aa). Low complexity-rich tracts occupy residues 427-441, 458-500, and 508-523; these read AAIA…PQQR, PAAA…NSSP, and YPQQ…AQMQ. Positions 529 to 545 are enriched in polar residues; the sequence is PATQPQASAQIPVQGQT. Low complexity-rich tracts occupy residues 550–579 and 606–616; these read PRAQ…PNTG and AGASQSQQAQA.

This sequence belongs to the DEAD box helicase family. DDX6/DHH1 subfamily.

It is found in the cytoplasm. It localises to the P-body. It carries out the reaction ATP + H2O = ADP + phosphate + H(+). In terms of biological role, ATP-dependent RNA helicase involved in mRNA turnover, and more specifically in mRNA decapping. Is involved in G1/S DNA-damage checkpoint recovery, probably through the regulation of the translational status of a subset of mRNAs. May also have a role in translation and mRNA nuclear export. Blocks autophagy in nutrient-rich conditions by, at least partly, binding and repressing the expression of a set of ATG genes, including ATG3, ATG7, ATG8, ATG19, ATG20 and ATG22. VAD1-mediated repression of autophagy is regulated by TOR-dependent phosphorylation of the decapping enzyme DCP2. Regulates multiple virulence-associated genes. Repression of autophagy by VAD1 also regulates the pathogenesis. The protein is ATP-dependent RNA helicase VAD1 of Cryptococcus neoformans var. grubii serotype A (strain H99 / ATCC 208821 / CBS 10515 / FGSC 9487) (Filobasidiella neoformans var. grubii).